The chain runs to 345 residues: Phosphoribosylformylglycinamidine cyclo-ligase (345 aa).

Belongs to the AIR synthase family.

The protein localises to the cytoplasm. It carries out the reaction 2-formamido-N(1)-(5-O-phospho-beta-D-ribosyl)acetamidine + ATP = 5-amino-1-(5-phospho-beta-D-ribosyl)imidazole + ADP + phosphate + H(+). It functions in the pathway purine metabolism; IMP biosynthesis via de novo pathway; 5-amino-1-(5-phospho-D-ribosyl)imidazole from N(2)-formyl-N(1)-(5-phospho-D-ribosyl)glycinamide: step 2/2. The protein is Phosphoribosylformylglycinamidine cyclo-ligase of Escherichia coli (strain 55989 / EAEC).